Here is a 349-residue protein sequence, read N- to C-terminus: Protein-glutamate methylesterase/protein-glutamine glutaminase (349 aa).

Residues 5–122 (RVLSVDDSAL…REGMLAYSEM (118 aa)) enclose the Response regulatory domain. Aspartate 56 bears the 4-aspartylphosphate mark. One can recognise a CheB-type methylesterase domain in the interval 152-344 (LLSSEKLIAI…QQMLAKISAG (193 aa)). Active-site residues include serine 164, histidine 190, and aspartate 286.

This sequence belongs to the CheB family. Phosphorylated by CheA. Phosphorylation of the N-terminal regulatory domain activates the methylesterase activity.

The protein resides in the cytoplasm. It catalyses the reaction [protein]-L-glutamate 5-O-methyl ester + H2O = L-glutamyl-[protein] + methanol + H(+). The enzyme catalyses L-glutaminyl-[protein] + H2O = L-glutamyl-[protein] + NH4(+). Functionally, involved in chemotaxis. Part of a chemotaxis signal transduction system that modulates chemotaxis in response to various stimuli. Catalyzes the demethylation of specific methylglutamate residues introduced into the chemoreceptors (methyl-accepting chemotaxis proteins or MCP) by CheR. Also mediates the irreversible deamidation of specific glutamine residues to glutamic acid. The sequence is that of Protein-glutamate methylesterase/protein-glutamine glutaminase from Escherichia coli O6:H1 (strain CFT073 / ATCC 700928 / UPEC).